A 1320-amino-acid polypeptide reads, in one-letter code: Sister chromatid cohesion protein PDS5 homolog A (1320 aa).

HEAT repeat units follow at residues 156–195 (NEIF…EGDG), 272–310 (PLLL…AKDS), 388–426 (NLVN…KYCL), 709–747 (PQIR…NKEV), and 990–1028 (SLLP…CLWF). Residues 1158 to 1179 (TFTSETGSNASTNSQPSSPATN) are compositionally biased toward polar residues. A disordered region spans residues 1158 to 1320 (TFTSETGSNA…APQRQIDLQR (163 aa)). The segment covering 1180-1194 (KSRDVSSEVGARENE) has biased composition (basic and acidic residues). Over residues 1225 to 1241 (GTENSVSSNPSAGSQPP) the composition is skewed to polar residues. Residues 1255–1267 (AGAATQEKEAGAT) show a composition bias toward low complexity. Residues 1283-1293 (QDPSSTASTDA) are compositionally biased toward polar residues. Positions 1294–1309 (LSDKTPKQQKEAEPKR) are enriched in basic and acidic residues.

It belongs to the PDS5 family. In terms of assembly, interacts with the cohesin complex. Binds chromatin in a cohesin-dependent manner.

The protein resides in the nucleus. Its function is as follows. May regulate sister chromatid cohesion during mitosis and couple it to DNA replication. In Danio rerio (Zebrafish), this protein is Sister chromatid cohesion protein PDS5 homolog A.